We begin with the raw amino-acid sequence, 537 residues long: MGCVQCKDKEATKLTEERDGSLNQSSGYRYGTDPTPQHYPSFGVTSIPNYNNFHGAGGQGLTVFGGVNSSSHTGTLRTRGGTGVTLFVALYDYEARTEDDLSFHKGEKFQILNSSEGDWWEARSLTTGETGYIPSNYVAPVDSIQAEEWYFGKLGRKDAERQLLSFGNPRGTFLIRESETTKGAYSLSIRDWDDMKGDHVKHYKIRKLDNGGYYITTRAQFETLQQLVQHYSERAAGLCCRLVVPCHKGMPRLTDLSVKTKDVWEIPRESLQLIKRLGNGQFGEVWMGTWNGNTKVAIKTLKPGTMSPESFLEEAQIMKKLKHDKLVQLYAVVSEEPIYIVTEYMNKGSLLDFLKDGEGRALKLPNLVDMAAQVAAGMAYIERMNYIHRDLRSANILVGNGLICKIADFGLARLIEDNEYTARQGAKFPIKWTAPEAALYGRFTIKSDVWSFGILLTELVTKGRVPYPGMNNREVLEQVERGYRMPCPQDCPISLHELMIHCWKKDPEERPTFEYLQGFLEDYFTATEPQYQPGENL.

Gly-2 carries N-myristoyl glycine lipidation. Residues Cys-3 and Cys-6 are each lipidated (S-palmitoyl cysteine). At Thr-12 the chain carries Phosphothreonine; by PKC. Residues 14-35 (LTEERDGSLNQSSGYRYGTDPT) form a disordered region. Ser-21 and Ser-26 each carry phosphoserine. One can recognise an SH3 domain in the interval 82–143 (TGVTLFVALY…PSNYVAPVDS (62 aa)). The SH2 domain occupies 149 to 246 (WYFGKLGRKD…GLCCRLVVPC (98 aa)). Residue Tyr-185 is modified to Phosphotyrosine. The region spanning 271–524 (LQLIKRLGNG…YLQGFLEDYF (254 aa)) is the Protein kinase domain. ATP-binding positions include 277 to 285 (LGNGQFGEV) and Lys-299. Asp-390 serves as the catalytic Proton acceptor. Residue Tyr-420 is modified to Phosphotyrosine; by autocatalysis. At Tyr-531 the chain carries Phosphotyrosine; by CSK.

Belongs to the protein kinase superfamily. Tyr protein kinase family. SRC subfamily. In terms of assembly, interacts (via its SH3 domain) with PIK3R1 and PRMT8. Interacts with FYB1, PAG1, and SH2D1A. Interacts with CD79A (tyrosine-phosphorylated form); the interaction increases FYN activity. Interacts (via SH2 domain) with CSF1R (tyrosine phosphorylated). Interacts with TOM1L1 (phosphorylated form). Interacts with KDR (tyrosine phosphorylated). Interacts (via SH3 domain) with KLHL2 (via N-terminus). Interacts with SH2D1A and SLAMF1. Interacts with ITCH; the interaction phosphorylates ITCH and negatively regulates its activity. Interacts with FASLG. Interacts with RUNX3. Interacts with KIT. Interacts with EPHA8; possible downstream effector of EPHA8 in regulation of cell adhesion. Interacts with PTK2/FAK1; this interaction leads to PTK2/FAK1 phosphorylation and activation. Interacts with CAV1; this interaction couples integrins to the Ras-ERK pathway. Interacts with UNC119. Interacts (via SH2 domain) with PTPRH (phosphorylated form). Interacts with PTPRO (phosphorylated form). Interacts with PTPRB (phosphorylated form). Interacts with FYB2. Interacts with DSCAM. Interacts with SKAP1 and FYB1; this interaction promotes the phosphorylation of CLNK. Interacts with NEDD9; in the presence of PTK2. The cofactor is Mn(2+). Autophosphorylated at Tyr-420. Phosphorylation on the C-terminal tail at Tyr-531 by CSK maintains the enzyme in an inactive state. PTPRC/CD45 dephosphorylates Tyr-531 leading to activation. Ultraviolet B (UVB) strongly increase phosphorylation at Thr-12 and kinase activity, and promotes translocation from the cytoplasm to the nucleus. Dephosphorylation at Tyr-420 by PTPN2 negatively regulates T-cell receptor signaling. Phosphorylated at tyrosine residues, which can be enhanced by NTN1. In terms of processing, palmitoylated. Palmitoylation at Cys-3 and Cys-6, probably by ZDHHC21, regulates subcellular location.

The protein localises to the cytoplasm. Its subcellular location is the nucleus. The protein resides in the cell membrane. It localises to the perikaryon. The enzyme catalyses L-tyrosyl-[protein] + ATP = O-phospho-L-tyrosyl-[protein] + ADP + H(+). With respect to regulation, inhibited by phosphorylation of Tyr-531 by leukocyte common antigen and activated by dephosphorylation of this site. In terms of biological role, non-receptor tyrosine-protein kinase that plays a role in many biological processes including regulation of cell growth and survival, cell adhesion, integrin-mediated signaling, cytoskeletal remodeling, cell motility, immune response and axon guidance. Inactive FYN is phosphorylated on its C-terminal tail within the catalytic domain. Following activation by PKA, the protein subsequently associates with PTK2/FAK1, allowing PTK2/FAK1 phosphorylation, activation and targeting to focal adhesions. Involved in the regulation of cell adhesion and motility through phosphorylation of CTNNB1 (beta-catenin) and CTNND1 (delta-catenin). Regulates cytoskeletal remodeling by phosphorylating several proteins including the actin regulator WAS and the microtubule-associated proteins MAP2 and MAPT. Promotes cell survival by phosphorylating AGAP2/PIKE-A and preventing its apoptotic cleavage. Participates in signal transduction pathways that regulate the integrity of the glomerular slit diaphragm (an essential part of the glomerular filter of the kidney) by phosphorylating several slit diaphragm components including NPHS1, KIRREL1 and TRPC6. Plays a role in neural processes by phosphorylating DPYSL2, a multifunctional adapter protein within the central nervous system, ARHGAP32, a regulator for Rho family GTPases implicated in various neural functions, and SNCA, a small pre-synaptic protein. Involved in reelin signaling by mediating phosphorylation of DAB1 following reelin (RELN)-binding to its receptor. Participates in the downstream signaling pathways that lead to T-cell differentiation and proliferation following T-cell receptor (TCR) stimulation. Phosphorylates PTK2B/PYK2 in response to T-cell receptor activation. Also participates in negative feedback regulation of TCR signaling through phosphorylation of PAG1, thereby promoting interaction between PAG1 and CSK and recruitment of CSK to lipid rafts. CSK maintains LCK and FYN in an inactive form. Promotes CD28-induced phosphorylation of VAV1. In mast cells, phosphorylates CLNK after activation of immunoglobulin epsilon receptor signaling. Can also promote CD244-mediated NK cell activation. The protein is Tyrosine-protein kinase Fyn of Bos taurus (Bovine).